Reading from the N-terminus, the 373-residue chain is Ferroptosis suppressor protein 1 (373 aa).

Residue G2 is the site of N-myristoyl glycine attachment. The helical transmembrane segment at 7-27 (VESGALHVVIVGGGFGGIAAA) threads the bilayer. 6-hydroxy-FAD contacts are provided by residues 18–22 (GGGFG), R54, and V82. An N6-acetyllysine; by KAT2B modification is found at K168. D285 is a 6-hydroxy-FAD binding site.

This sequence belongs to the FAD-dependent oxidoreductase family. In terms of assembly, interacts with importin subunits KPNA2 and IPO5; this interaction likely mediates the translocation into the nucleus upon oxidative stress. 6-hydroxy-FAD serves as cofactor. Post-translationally, N-myristoylation at Gly-2 mediates the recruitment to lipid droplets and plasma membrane, enabling its anti-lipid peroxidation activity. Acetylation at Lys-168 prevents AIFM2 ubiquitination and degradation, thereby inhibiting ferroptosis. KAT2B mediates acetylation at Lys-168, while HDAC3 removes it. In terms of processing, ubiquitinated. AIFM2 undergoes 'Lys-29'-ubiquitination and proteasomal degradation, which is inhibited by acetylation at Lys-168. As to expression, detected in most normal tissues as two transcripts of 1.8 and 4.0 kb in length, respectively. Highly expressed in heart, moderately in liver and skeletal muscles, and expressed at low levels in placenta, lung, kidney, and pancreas. Both transcripts expressed following p53/TP53 induction. The shorter 1.8 kb transcript seems to be the major transcript in EB1 colon cancer cells.

It localises to the lipid droplet. The protein resides in the cell membrane. The protein localises to the cytoplasm. Its subcellular location is the mitochondrion membrane. It is found in the nucleus. It carries out the reaction ubiquinone-10 + NADH + H(+) = ubiquinol-10 + NAD(+). The catalysed reaction is phylloquinone + NADH + H(+) = phylloquinol + NAD(+). The enzyme catalyses menaquinone-4 + NADH + H(+) = menaquinol-4 + NAD(+). It catalyses the reaction menadione + NADH + H(+) = menadiol + NAD(+). The modification by 4-hydroxy-2-nonenal (HNE) adduction in mitochondria results in loss of the oxidoreductase activity and activation of a novel function in mitochondrial oxidative stress signaling. Its function is as follows. An NAD(P)H-dependent oxidoreductase that acts as a key inhibitor of ferroptosis. At the plasma membrane, catalyzes reduction of coenzyme Q/ubiquinone-10 to ubiquinol-10, a lipophilic radical-trapping antioxidant that prevents lipid oxidative damage and consequently ferroptosis. Acts in parallel to GPX4 to suppress phospholipid peroxidation and ferroptosis. This anti-ferroptotic function is independent of cellular glutathione levels. Also acts as a potent radical-trapping antioxidant by mediating warfarin-resistant vitamin K reduction in the canonical vitamin K cycle: catalyzes NAD(P)H-dependent reduction of vitamin K (phylloquinone, menaquinone-4 and menadione) to hydroquinone forms. Hydroquinones act as potent radical-trapping antioxidants inhibitor of phospholipid peroxidation and ferroptosis. May play a role in mitochondrial stress signaling. Upon oxidative stress, associates with the lipid peroxidation end product 4-hydroxy-2-nonenal (HNE) forming a lipid adduct devoid of oxidoreductase activity, which then translocates from mitochondria into the nucleus triggering DNA damage and cell death. Capable of DNA binding in a non-sequence specific way. This is Ferroptosis suppressor protein 1 from Homo sapiens (Human).